The chain runs to 183 residues: Ferritin light chain 1 (183 aa).

A Ferritin-like diiron domain is found at 7 to 156 (QNYSTEVEAA…NHLTNLRRVA (150 aa)). Residues Glu54, Glu57, Glu58, Glu61, and Glu64 each contribute to the Fe cation site.

It belongs to the ferritin family. Oligomer of 24 subunits. There are two types of subunits: L (light) chain and H (heavy) chain. The major chain can be light or heavy, depending on the species and tissue type. The functional molecule forms a roughly spherical shell with a diameter of 12 nm and contains a central cavity into which the insoluble mineral iron core is deposited. Interacts with NCOA4. As to expression, in rat liver, the light chain is the major chain.

It is found in the cytoplasmic vesicle. Its subcellular location is the autophagosome. The protein resides in the cytoplasm. It localises to the autolysosome. Stores iron in a soluble, non-toxic, readily available form. Important for iron homeostasis. Iron is taken up in the ferrous form and deposited as ferric hydroxides after oxidation. Also plays a role in delivery of iron to cells. Mediates iron uptake in capsule cells of the developing kidney. Delivery to lysosomes by the cargo receptor NCOA4 for autophagic degradation and release or iron. This Rattus norvegicus (Rat) protein is Ferritin light chain 1 (Ftl1).